A 318-amino-acid polypeptide reads, in one-letter code: Cell growth regulator with EF hand domain protein 1 (318 aa).

The N-terminal stretch at 1–19 is a signal peptide; sequence MLPLTMTVLILLLLPTGQA. EF-hand domains lie at 69-104 and 114-149; these read SREQVLLYLFALHDYDQSGQLDGLELLSMLTAALAP and PVILIVDKVLETQDLNGDGLMTPAELINFPGVALRH. Ca(2+) contacts are provided by D82, D84, S86, Q88, E93, D127, N129, D131, and E138. The disordered stretch occupies residues 177–318; that stretch reads LRQETQEAPG…HIVQVENDEI (142 aa). Composition is skewed to basic and acidic residues over residues 186-202 and 223-233; these read GPREEAKGQVEARRESL and GEAEGQAEAKG. 3 repeat units span residues 219–235, 236–252, and 253–269. The 4 X 17 AA approximate tandem repeats of P-G-P-R-G-E-A-G-G-Q-A-E-A-[KR]-G-D-A stretch occupies residues 219 to 286; that stretch reads PGPRGEAEGQ…GGQAEARENG (68 aa). The segment covering 235–272 has biased composition (low complexity); it reads APGPRGEAGGQAEAEGDAPGPRGEAGGQAEAEGDAPGP. One copy of the 4; approximate repeat lies at 270 to 286; it reads PGPRGEAGGQAEARENG. Residues 281–293 are compositionally biased toward basic and acidic residues; the sequence is EARENGEEAKELP.

Post-translationally, probably digested extracellularly by an unknown serine protease generating extremely hydrophobic bioactive peptides.

The protein localises to the secreted. Functionally, mediates cell-cell adhesion in a calcium-dependent manner. Able to inhibit growth in several cell lines. The sequence is that of Cell growth regulator with EF hand domain protein 1 from Homo sapiens (Human).